A 408-amino-acid chain; its full sequence is Centromere protein U (408 aa).

Residues 1 to 33 (DRPRPARLSHARFSKNHSGRTHSMKDKAGRKHR) show a composition bias toward basic residues. Residues 1-218 (DRPRPARLSH…GKRKKPRSYT (218 aa)) form a disordered region. Position 72 is a phosphothreonine; by PLK1 (Thr-72). The residue at position 92 (Thr-92) is a Phosphothreonine. Residues 94-103 (QEKEAKRSSD) show a composition bias toward basic and acidic residues. The residue at position 102 (Ser-102) is a Phosphoserine. Position 104 is a phosphothreonine (Thr-104). Phosphoserine occurs at positions 105, 110, and 114. Over residues 118–127 (SAKKPRRKLK) the composition is skewed to basic residues. Ser-130, Ser-133, and Ser-135 each carry phosphoserine. Residues 176-186 (PQKTGPQSAES) show a composition bias toward polar residues. Lys-178 is covalently cross-linked (Glycyl lysine isopeptide (Lys-Gly) (interchain with G-Cter in SUMO2)). 2 positions are modified to phosphoserine: Ser-183 and Ser-187. At Thr-192 the chain carries Phosphothreonine. Ser-222 bears the Phosphoserine mark. A coiled-coil region spans residues 273–350 (SNLKEELIKM…LRKAAYFLSN (78 aa)). The short motif at 293 to 310 (KRKNAKIISNIEKKRQRL) is the Nuclear localization signal element.

This sequence belongs to the CENP-U/AME1 family. In terms of assembly, component of the CENPA-NAC complex, at least composed of CENPA, CENPC, CENPH, CENPM, CENPN, CENPT and CENPU. The CENPA-NAC complex interacts with the CENPA-CAD complex, composed of CENPI, CENPK, CENPL, CENPO, CENPP, CENPQ, CENPR and CENPS. Interacts with MLF1. In terms of processing, phosphorylated by PLK1 at Thr-72, creating a self-tethering site that specifically interacts with the polo-box domain of PLK1.

It is found in the cytoplasm. Its subcellular location is the nucleus. The protein localises to the chromosome. The protein resides in the centromere. It localises to the kinetochore. Its function is as follows. Component of the CENPA-NAC (nucleosome-associated) complex, a complex that plays a central role in assembly of kinetochore proteins, mitotic progression and chromosome segregation. The CENPA-NAC complex recruits the CENPA-CAD (nucleosome distal) complex and may be involved in incorporation of newly synthesized CENPA into centromeres. Plays an important role in the correct PLK1 localization to the mitotic kinetochores. A scaffold protein responsible for the initial recruitment and maintenance of the kinetochore PLK1 population until its degradation. Involved in transcriptional repression. This chain is Centromere protein U (CENPU), found in Bos taurus (Bovine).